The following is a 105-amino-acid chain: Cell division protein FtsL (105 aa).

At 1–24 the chain is on the cytoplasmic side; that stretch reads MAEKMEKTGQILQMQLKRFSRVEK. A helical transmembrane segment spans residues 25–45; sequence AFYFSIAVTTLIVAISIIFMQ. At 46–105 the chain is on the extracellular side; the sequence is TKLLQVQNDLTKINAQIEEKKTELDDAKQEVNELLRAERLKEIANSHDLQLNNENIRIAE.

This sequence belongs to the FtsL family.

The protein localises to the cell membrane. In terms of biological role, essential cell division protein. The protein is Cell division protein FtsL of Streptococcus pneumoniae (strain ATCC BAA-255 / R6).